The sequence spans 129 residues: Small ribosomal subunit protein uS11 (129 aa).

The protein belongs to the universal ribosomal protein uS11 family. As to quaternary structure, part of the 30S ribosomal subunit. Interacts with proteins S7 and S18. Binds to IF-3.

Its function is as follows. Located on the platform of the 30S subunit, it bridges several disparate RNA helices of the 16S rRNA. Forms part of the Shine-Dalgarno cleft in the 70S ribosome. The polypeptide is Small ribosomal subunit protein uS11 (Actinobacillus succinogenes (strain ATCC 55618 / DSM 22257 / CCUG 43843 / 130Z)).